The primary structure comprises 289 residues: Serine/threonine-protein phosphatase Pgam5, mitochondrial (289 aa).

Belongs to the phosphoglycerate mutase family. BPG-dependent PGAM subfamily. In terms of assembly, interacts with Pk92B/ASK1.

The protein localises to the mitochondrion outer membrane. The enzyme catalyses O-phospho-L-seryl-[protein] + H2O = L-seryl-[protein] + phosphate. It carries out the reaction O-phospho-L-threonyl-[protein] + H2O = L-threonyl-[protein] + phosphate. Displays phosphatase activity for serine/threonine residues, and dephosphorylates and activates Pk92B kinase. Has apparently no phosphoglycerate mutase activity. This Drosophila yakuba (Fruit fly) protein is Serine/threonine-protein phosphatase Pgam5, mitochondrial.